The chain runs to 456 residues: Gamma-glutamyl phosphate reductase (456 aa).

The residue at position 2 (serine 2) is an N-acetylserine.

Belongs to the gamma-glutamyl phosphate reductase family.

The enzyme catalyses L-glutamate 5-semialdehyde + phosphate + NADP(+) = L-glutamyl 5-phosphate + NADPH + H(+). The protein operates within amino-acid biosynthesis; L-proline biosynthesis; L-glutamate 5-semialdehyde from L-glutamate: step 2/2. In terms of biological role, catalyzes the NADPH dependent reduction of L-gamma-glutamyl 5-phosphate into L-glutamate 5-semialdehyde and phosphate. The product spontaneously undergoes cyclization to form 1-pyrroline-5-carboxylate. This Saccharomyces cerevisiae (strain ATCC 204508 / S288c) (Baker's yeast) protein is Gamma-glutamyl phosphate reductase (PRO2).